We begin with the raw amino-acid sequence, 167 residues long: Small ribosomal subunit protein uS3m (167 aa).

A mitochondrion-targeting transit peptide spans 1 to 35; the sequence is MVALYCGGGLRPLMLSWSRDLPCIWRALHTSAVCF.

It belongs to the universal ribosomal protein uS3 family. Component of the mitochondrial ribosome small subunit (28S) which comprises a 12S rRNA and about 30 distinct proteins.

It localises to the mitochondrion. The polypeptide is Small ribosomal subunit protein uS3m (MRPS24) (Bos taurus (Bovine)).